Here is a 224-residue protein sequence, read N- to C-terminus: ATP synthase subunit a (224 aa).

6 consecutive transmembrane segments (helical) span residues phenylalanine 17–leucine 37, isoleucine 72–isoleucine 92, leucine 99–isoleucine 119, methionine 125–isoleucine 145, isoleucine 166–leucine 186, and valine 187–isoleucine 207.

It belongs to the ATPase A chain family. In terms of assembly, F-type ATPases have 2 components, CF(1) - the catalytic core - and CF(0) - the membrane proton channel. CF(1) has five subunits: alpha(3), beta(3), gamma(1), delta(1), epsilon(1). CF(0) has three main subunits: a, b and c.

Its subcellular location is the mitochondrion inner membrane. In terms of biological role, mitochondrial membrane ATP synthase (F(1)F(0) ATP synthase or Complex V) produces ATP from ADP in the presence of a proton gradient across the membrane which is generated by electron transport complexes of the respiratory chain. F-type ATPases consist of two structural domains, F(1) - containing the extramembraneous catalytic core and F(0) - containing the membrane proton channel, linked together by a central stalk and a peripheral stalk. During catalysis, ATP synthesis in the catalytic domain of F(1) is coupled via a rotary mechanism of the central stalk subunits to proton translocation. Key component of the proton channel; it may play a direct role in the translocation of protons across the membrane. This is ATP synthase subunit a (mt:ATPase6) from Drosophila melanogaster (Fruit fly).